A 197-amino-acid polypeptide reads, in one-letter code: Small ribosomal subunit protein uS4B (197 aa).

An S4 RNA-binding domain is found at 88 to 150 (SRLDNMVYRM…SRKTEMFVNN (63 aa)).

Belongs to the universal ribosomal protein uS4 family. As to quaternary structure, part of the 30S ribosomal subunit. Contacts protein S5. The interaction surface between S4 and S5 is involved in control of translational fidelity.

Functionally, one of the primary rRNA binding proteins, it binds directly to 16S rRNA where it nucleates assembly of the body of the 30S subunit. In terms of biological role, with S5 and S12 plays an important role in translational accuracy. The protein is Small ribosomal subunit protein uS4B of Clostridium perfringens (strain ATCC 13124 / DSM 756 / JCM 1290 / NCIMB 6125 / NCTC 8237 / Type A).